Reading from the N-terminus, the 123-residue chain is Large ribosomal subunit protein uL14 (123 aa).

Belongs to the universal ribosomal protein uL14 family. In terms of assembly, part of the 50S ribosomal subunit. Forms a cluster with proteins L3 and L19. In the 70S ribosome, L14 and L19 interact and together make contacts with the 16S rRNA in bridges B5 and B8.

Binds to 23S rRNA. Forms part of two intersubunit bridges in the 70S ribosome. This chain is Large ribosomal subunit protein uL14, found in Cronobacter sakazakii (strain ATCC BAA-894) (Enterobacter sakazakii).